The following is an 818-amino-acid chain: H(+)/Cl(-) exchange transporter 3 (818 aa).

The Cytoplasmic portion of the chain corresponds to 1-125 (MESEQLFHRG…WEMTKSLYDA (125 aa)). 3 short sequence motifs (di-leucine internalization motif; mediates targeting to late endosome and lysosome membranes) span residues 28 to 29 (LL), 46 to 47 (LL), and 71 to 75 (LLDLL). Residues 126 to 163 (WSGWLVVTLTGLASGALAGLIDIAADWMTDLKEGICLS) traverse the membrane as a helical segment. Residue Asn177 is glycosylated (N-linked (GlcNAc...) asparagine). The chain crosses the membrane as a helical span at residues 209-232 (MNYIMYIFWALSFAFLAVSLVKVF). The short motif at 238–242 (GSGIP) is the Selectivity filter part_1 element. Residue Ser239 participates in chloride binding. Residues 241-248 (IPEIKTIL) constitute an intramembrane region (helical). 2 helical membrane-spanning segments follow: residues 258–276 (GKWT…VASG) and 282–301 (EGPL…YLFP). A Selectivity filter part_2 motif is present at residues 280-284 (GKEGP). Intramembrane regions (helical) lie at residues 313-325 (VLSA…VSVA) and 329-337 (PIGGVLFSL). 3 helical membrane passes run 349-367 (LWRS…RSIN), 391-416 (FPFI…AWCR), and 423-443 (FGKY…VIAF). Asn451 and Asn479 each carry an N-linked (GlcNAc...) asparagine glycan. Transmembrane regions (helical) follow at residues 500 to 520 (IWQL…TFGI) and 525 to 544 (GLFI…VGIA). The short motif at 525–529 (GLFIP) is the Selectivity filter part_3 element. Phe527 is a binding site for chloride. Intramembrane regions (helical) lie at residues 572-586 (GLYA…LGGV) and 590-601 (TVSLVVIVFELT). The note=Loop between two helices intramembrane region spans 602–605 (GGLE). The helical transmembrane segment at 606–624 (YIVPLMAAVMTSKWVGDAF) threads the bilayer. Residues 625 to 818 (GREGIYEAHI…NQDPASIMFN (194 aa)) lie on the Cytoplasmic side of the membrane. Tyr630 is a binding site for chloride. 2 consecutive CBS domains span residues 658-722 (MRPR…ARKK) and 755-812 (LDMS…NQDP). Residues 689–691 (YNG) and 796–799 (TKKD) each bind ATP.

It belongs to the chloride channel (TC 2.A.49) family. ClC-3/CLCN3 subfamily. In terms of assembly, monomer and homodimer. Forms heterodimers with CLCN4. In terms of processing, N-glycosylated. As to expression, abundant in brain, especially in the olfactory bulb, hippocampus, and cerebellum. A moderate expression is seen in the lung, kidney and adrenal gland.

Its subcellular location is the lysosome membrane. The protein localises to the late endosome membrane. It localises to the cell membrane. The protein resides in the early endosome membrane. In terms of biological role, strongly outwardly rectifying, electrogenic H(+)/Cl(-)exchanger which mediates the exchange of chloride ions against protons. The CLC channel family contains both chloride channels and proton-coupled anion transporters that exchange chloride or another anion for protons. The presence of conserved gating glutamate residues is typical for family members that function as antiporters. Strongly outwardly rectifying, electrogenic H(+)/Cl(-)exchanger which mediates the exchange of chloride ions against protons. May play an important role in neuronal cell function through regulation of membrane excitability by protein kinase C. It could help neuronal cells to establish short-term memory. The protein is H(+)/Cl(-) exchange transporter 3 (Clcn3) of Rattus norvegicus (Rat).